The following is a 629-amino-acid chain: MSTTNYPLLERVNDPADLRRLPRAELKALATELRAFVLESVSKTGGHLSSNLGTVELTVALHAVFDTPRDRLVWDVGHQTYPHKILTGRRDRMPSLRQLGGLSGFPQRAESEYDTFGTAHSSTSISAALGMALAAKQRGDERRCVAIIGDGAMTAGMAFEALNNAGVADANLLVILNDNDMSISPPVGALNRYLAQLMSGQFYAKARDVGKSVLKNAPPLLELAKRLEQQAKGMVVPATLFEKFGFNYIGPIDGHDLDSLIPTLENIRGLKGPQFLHVVTKKGQGYKLAEADPVAYHGPGKFDPRVGLVKPATPPKQTFTQVFGQWLCDMAEKDERLVGITPAMREGSGMVEFHQRFPERYYDVGIAEQHAVTFAAGMACEGAKPVVAIYSTFLQRAYDQLIHDVALQNLPVVFALDRAGLVGADGATHAGAYDIAFVRCIPNMSMACPADERECRQLLTTAYEQDHPVAVRYPRGAGVGVAPLPDLEGLPFGKGEVRRKGRRMAILAFGTLLYPALQAAEALDATVVNMRWAKPLDTQLLLQVAAEHDALVTVEEGCIMGGAGSAVAEALAAAGVQRPLLQLGLPDAFIEHGDPAKLLALQGLDAAGMQRSITERFGALPGEQALAAA.

Residues histidine 78 and 119–121 (AHS) contribute to the thiamine diphosphate site. Aspartate 150 provides a ligand contact to Mg(2+). Residues 151–152 (GA), asparagine 179, tyrosine 286, and glutamate 368 contribute to the thiamine diphosphate site. Asparagine 179 lines the Mg(2+) pocket.

Belongs to the transketolase family. DXPS subfamily. As to quaternary structure, homodimer. Requires Mg(2+) as cofactor. It depends on thiamine diphosphate as a cofactor.

The catalysed reaction is D-glyceraldehyde 3-phosphate + pyruvate + H(+) = 1-deoxy-D-xylulose 5-phosphate + CO2. Its pathway is metabolic intermediate biosynthesis; 1-deoxy-D-xylulose 5-phosphate biosynthesis; 1-deoxy-D-xylulose 5-phosphate from D-glyceraldehyde 3-phosphate and pyruvate: step 1/1. In terms of biological role, catalyzes the acyloin condensation reaction between C atoms 2 and 3 of pyruvate and glyceraldehyde 3-phosphate to yield 1-deoxy-D-xylulose-5-phosphate (DXP). This Acidovorax ebreus (strain TPSY) (Diaphorobacter sp. (strain TPSY)) protein is 1-deoxy-D-xylulose-5-phosphate synthase.